Reading from the N-terminus, the 423-residue chain is Histidine--tRNA ligase (423 aa).

Belongs to the class-II aminoacyl-tRNA synthetase family.

The protein resides in the cytoplasm. It carries out the reaction tRNA(His) + L-histidine + ATP = L-histidyl-tRNA(His) + AMP + diphosphate + H(+). This Picrophilus torridus (strain ATCC 700027 / DSM 9790 / JCM 10055 / NBRC 100828 / KAW 2/3) protein is Histidine--tRNA ligase.